The sequence spans 354 residues: Selenide, water dikinase (354 aa).

Residue Cys23 is part of the active site. ATP is bound by residues Lys26 and 54–56 (TSD). Asp57 serves as a coordination point for Mg(2+). Residues Asp74, Asp97, and 145–147 (GHS) each bind ATP. Asp97 is a Mg(2+) binding site. Asp233 is a Mg(2+) binding site.

Belongs to the selenophosphate synthase 1 family. Class I subfamily. As to quaternary structure, homodimer. It depends on Mg(2+) as a cofactor.

It carries out the reaction hydrogenselenide + ATP + H2O = selenophosphate + AMP + phosphate + 2 H(+). Functionally, synthesizes selenophosphate from selenide and ATP. The sequence is that of Selenide, water dikinase from Burkholderia ambifaria (strain MC40-6).